A 374-amino-acid polypeptide reads, in one-letter code: 5-hydroxytryptamine receptor 1D (374 aa).

The Extracellular portion of the chain corresponds to 1-35 (MSPPNQSLEGLPQEASNRSLNVTGAWDPEVLQALR). N-linked (GlcNAc...) asparagine glycans are attached at residues N5, N17, and N21. A helical membrane pass occupies residues 36–61 (ISLVVVLSVITLATVLSNAFVLTTIL). At 62-72 (LTKKLHTPANY) the chain is on the cytoplasmic side. A helical membrane pass occupies residues 73-94 (LIGSLATTDLLVSILVMPISIA). At 95-106 (YTTTRTWNFGQI) the chain is on the extracellular side. The helical transmembrane segment at 107 to 131 (LCDIWVSSDITCCTASILHLCVIAL) threads the bilayer. Cysteines 108 and 185 form a disulfide. 2 residues coordinate serotonin: D115 and C119. The DRY motif; important for ligand-induced conformation changes motif lies at 132-134 (DRY). The Cytoplasmic segment spans residues 132 to 151 (DRYWAITDALEYSKRRTAGH). Residues 152-173 (AAAMIAAVWIISICISIPPLFW) form a helical membrane-spanning segment. Residues 174–191 (RQATAHEEMSDCLVNTSQ) are Extracellular-facing. Residues 192-215 (ISYTIYSTCGAFYIPSILLIILYG) form a helical membrane-spanning segment. The Cytoplasmic segment spans residues 216 to 297 (RIYVAARSRI…ISAARERKAT (82 aa)). Residues 298 to 323 (KTLGIILGAFIICWLPFFVVSLVLPI) traverse the membrane as a helical segment. S318 is a binding site for serotonin. The Extracellular portion of the chain corresponds to 324 to 332 (CRDSCWIHP). A helical transmembrane segment spans residues 333–356 (ALFDFFTWLGYLNSLINPVIYTVF). The short motif at 349 to 353 (NPVIY) is the NPxxY motif; important for ligand-induced conformation changes and signaling element. At 357 to 374 (NEDFRQAFQKVVHFRKIS) the chain is on the cytoplasmic side.

This sequence belongs to the G-protein coupled receptor 1 family. In terms of assembly, homodimer. Heterodimer with HTR1B. Detected in the motor column in spinal cord, and in several cranial motor nuclei, including nucleus ambiguous, oculomotoris, trochelaris and abducens. Detected in gamma motor neurons in the lumbar spinal cord. Detected in proprioceptive sensory neurons in dorsal root ganglia.

It localises to the cell membrane. Functionally, G-protein coupled receptor for 5-hydroxytryptamine (serotonin). Also functions as a receptor for ergot alkaloid derivatives, various anxiolytic and antidepressant drugs and other psychoactive substances. Ligand binding causes a conformation change that triggers signaling via guanine nucleotide-binding proteins (G proteins) and modulates the activity of downstream effectors, such as adenylate cyclase. HTR1D is coupled to G(i)/G(o) G alpha proteins and mediates inhibitory neurotransmission by inhibiting adenylate cyclase activity. Regulates the release of 5-hydroxytryptamine in the brain, and thereby affects neural activity. May also play a role in regulating the release of other neurotransmitters. May play a role in vasoconstriction. This is 5-hydroxytryptamine receptor 1D (Htr1d) from Mus musculus (Mouse).